The primary structure comprises 259 residues: Caffeoyl-CoA O-methyltransferase (259 aa).

K33 serves as a coordination point for substrate. Residues T75, E97, 99–100, S105, D123, and A152 each bind S-adenosyl-L-methionine; that span reads GV. D175 provides a ligand contact to substrate. D175 is an a divalent metal cation binding site. D177 contributes to the S-adenosyl-L-methionine binding site. 2 residues coordinate a divalent metal cation: D201 and N202. Residue N206 coordinates substrate.

This sequence belongs to the class I-like SAM-binding methyltransferase superfamily. Cation-dependent O-methyltransferase family. CCoAMT subfamily. It depends on a divalent metal cation as a cofactor.

It carries out the reaction (E)-caffeoyl-CoA + S-adenosyl-L-methionine = (E)-feruloyl-CoA + S-adenosyl-L-homocysteine + H(+). Its pathway is aromatic compound metabolism; phenylpropanoid biosynthesis. Functionally, methylates caffeoyl-CoA to feruloyl-CoA and 5-hydroxyferuloyl-CoA to sinapoyl-CoA. Plays a role in the synthesis of feruloylated polysaccharides. Involved in the reinforcement of the plant cell wall. Also involved in the responding to wounding or pathogen challenge by the increased formation of cell wall-bound ferulic acid polymers. The sequence is that of Caffeoyl-CoA O-methyltransferase (CCOAOMT) from Pinus taeda (Loblolly pine).